The primary structure comprises 105 residues: Nucleoid-associated protein cu1912 (105 aa).

This sequence belongs to the YbaB/EbfC family. Homodimer.

It is found in the cytoplasm. The protein resides in the nucleoid. In terms of biological role, binds to DNA and alters its conformation. May be involved in regulation of gene expression, nucleoid organization and DNA protection. This is Nucleoid-associated protein cu1912 from Corynebacterium urealyticum (strain ATCC 43042 / DSM 7109).